The following is a 349-amino-acid chain: Defect at low temperature protein 1 (349 aa).

The Cytoplasmic segment spans residues 1-18; sequence MPIIDFEIWKLWLFRSIK. Residues 19–39 traverse the membrane as a helical segment; the sequence is AIVIIFLVGFSIVLPVDSIVQ. Over 40–49 the chain is Extracellular; that stretch reads AAESSNTALN. The helical transmembrane segment at 50–70 threads the bilayer; it reads TFIVVGALVAFGLVSIIIIVG. Residues 71–349 are Cytoplasmic-facing; sequence RIIFCRSCIQ…ADSFKYVTHR (279 aa). Positions 312–333 are disordered; sequence VPTNPEEEHKMALDPQDPVSHK.

It belongs to the DLT1 family.

The protein localises to the membrane. Its function is as follows. Required for growth under high-pressure and low-temperature conditions. This Zygosaccharomyces rouxii (strain ATCC 2623 / CBS 732 / NBRC 1130 / NCYC 568 / NRRL Y-229) protein is Defect at low temperature protein 1 (DLT1).